A 250-amino-acid polypeptide reads, in one-letter code: UPF0524 protein C3orf70 (250 aa).

Residues 201 to 250 form a disordered region; sequence ESCDEDTEEGAELSSEEDYSPESSWEPDECTLLSPSQSDLEVIETIETTV. A compositionally biased stretch (acidic residues) spans 202–229; sequence SCDEDTEEGAELSSEEDYSPESSWEPDE.

Belongs to the UPF0524 family.

Its function is as follows. May play a role in neuronal and neurobehavioral development. This Homo sapiens (Human) protein is UPF0524 protein C3orf70 (C3orf70).